The chain runs to 218 residues: uncharacterized protein (218 aa).

The protein belongs to the glycosyltransferase 2 family.

This is an uncharacterized protein from Mycobacterium bovis (strain ATCC BAA-935 / AF2122/97).